The primary structure comprises 101 residues: Small ribosomal subunit protein uS14 (101 aa).

This sequence belongs to the universal ribosomal protein uS14 family. As to quaternary structure, part of the 30S ribosomal subunit. Contacts proteins S3 and S10.

Functionally, binds 16S rRNA, required for the assembly of 30S particles and may also be responsible for determining the conformation of the 16S rRNA at the A site. This is Small ribosomal subunit protein uS14 from Cellvibrio japonicus (strain Ueda107) (Pseudomonas fluorescens subsp. cellulosa).